A 527-amino-acid polypeptide reads, in one-letter code: Nucleobase-ascorbate transporter LPE1 (527 aa).

Helical transmembrane passes span 43 to 63 (LVMLGTTVLIATIIVPLMGGG), 68 to 88 (AIVIQTILFLSGINTLLQVHF), 92 to 112 (LPAVMSGSYTYIYPAVAIILS), 132 to 152 (LQGALIIAGVFQAVVGFFGIW), 163 to 183 (AAVPFVTLTGLGLFFFAFPGV), 189 to 209 (VGLPALVLLVIFAEYASHLFA), 219 to 239 (AVLVTVVIIWIYAEILTAAGA), 284 to 304 (FAMLAASFASLIESTGTLIAV), 361 to 383 (VIKISALFMIFFSLFAKFGAVLA), 387 to 409 (LPIFAALYCVLFAYSAGAGFSLL), 427 to 447 (LFLGLSIPQYFRVYEMFFGFG), and 458 to 478 (VMVNVIFSSPATVAAILAYLL).

This sequence belongs to the nucleobase:cation symporter-2 (NCS2) (TC 2.A.40) family. In terms of tissue distribution, highly expressed in roots.

The protein resides in the membrane. Inhibited by excess of xanthin, uric acid and ascorbic acid, and by 100 um N,N-dicyclohexylcarbodiimide and 30 um carbonyl cyanide m-chlorophenyl-hydrazone. In terms of biological role, high affinity uric acid-xanthine transporter in A.nidulans. Binds, but cannot transport ascorbic acid. The protein is Nucleobase-ascorbate transporter LPE1 (LPE1) of Zea mays (Maize).